We begin with the raw amino-acid sequence, 478 residues long: Solute carrier family 7 member 13 (478 aa).

Topologically, residues 1-14 (MAMDSKKEIRLKRE) are cytoplasmic. Residues 15–35 (LGYFWGTNFLIINIIGAGIFV) traverse the membrane as a helical segment. Over 36–47 (SPKGVLQHSSMN) the chain is Extracellular. Residues 48-68 (VGVSLCVWAVCAVLTLTSALC) traverse the membrane as a helical segment. Residues 69–89 (SAEIGITFPYSGAHYYFLKRC) are Cytoplasmic-facing. Residues 90-110 (FGPLVAFLRLWTSLFLGPGLI) form a helical membrane-spanning segment. Over 111–129 (ASQALLLAEYGVQPFYPSC) the chain is Extracellular. A helical membrane pass occupies residues 130–150 (SAPILPRKCLALAMLWIVGIL). Over 151-163 (NSRGVKELSWLQT) the chain is Cytoplasmic. A helical transmembrane segment spans residues 164 to 184 (VSSVLKVGILGVISLSGLFLL). Residues 185-208 (VRGKKENVQRLQNAFDAEFPEVSQ) lie on the Extracellular side of the membrane. A helical membrane pass occupies residues 209–229 (LIEAIFQGYFAFSGGGCFTCI). Topologically, residues 230-242 (AGELKKPSKTIPR) are cytoplasmic. Residues 243 to 263 (CIFTGLPLVTVVYLLANISYL) traverse the membrane as a helical segment. Over 264–288 (TVLTPQEMLSSDAVALTWTDRVIPQ) the chain is Extracellular. A helical membrane pass occupies residues 289–309 (FTWTVPFAISASLFINLVINV). The Cytoplasmic segment spans residues 310–338 (LETSRVLYIASENGQLPLLFCALNVHSSP). A helical membrane pass occupies residues 339–359 (FIAVLLIISMASILIVLTNLI). Asp-360 is a topological domain (extracellular). The helical transmembrane segment at 361–381 (LINYLYFVVSIWTALSIIGIL) threads the bilayer. Residues 382 to 395 (KLRYQEPNLHRPYK) lie on the Cytoplasmic side of the membrane. A helical membrane pass occupies residues 396–416 (VFLPFTFIALGITLSLVLIPL). Residues 417 to 423 (VKSPKLH) lie on the Extracellular side of the membrane. A helical transmembrane segment spans residues 424-444 (YIYVFLFLLSGLVFYVPLIHF). Residues 445 to 478 (KVKFVWFQKLTCYLQLLFNICIPDVSDDHIHEES) are Cytoplasmic-facing.

It belongs to the amino acid-polyamine-organocation (APC) superfamily. Disulfide-linked heterodimer composed of the catalytic light subunit SLC7A13 and the heavy subunit SLC3A1. As to expression, expressed in renal tubules in the outer stripe of the outer medulla and medullary ray (at protein level). Detected in male but not in female kidney.

The protein localises to the apical cell membrane. It carries out the reaction L-cystine(out) + L-aspartate(in) = L-cystine(in) + L-aspartate(out). It catalyses the reaction L-cystine(out) = L-cystine(in). The enzyme catalyses L-aspartate(in) + L-glutamate(out) = L-aspartate(out) + L-glutamate(in). The catalysed reaction is L-aspartate(in) + L-glutamine(out) = L-aspartate(out) + L-glutamine(in). It carries out the reaction L-aspartate(in) + L-methionine(out) = L-aspartate(out) + L-methionine(in). It catalyses the reaction L-leucine(out) + L-aspartate(in) = L-leucine(in) + L-aspartate(out). The enzyme catalyses L-valine(out) + L-aspartate(in) = L-valine(in) + L-aspartate(out). The catalysed reaction is L-aspartate(in) + L-phenylalanine(out) = L-aspartate(out) + L-phenylalanine(in). It carries out the reaction L-tyrosine(out) + L-aspartate(in) = L-tyrosine(in) + L-aspartate(out). It catalyses the reaction L-tryptophan(out) + L-aspartate(in) = L-tryptophan(in) + L-aspartate(out). In terms of biological role, associates with SLC3A1/rBAT to form a functional heterodimeric complex that transports anionic and neutral amino acids across the apical plasma membrane of renal epithelium. Preferentially mediates exchange transport, but can also operate via facilitated diffusion. May act as a major transporter for L-cystine in late proximal tubules, ensuring its reabsorption from the luminal fluid in exchange for cytosolic L-glutamate or L-aspartate. The sequence is that of Solute carrier family 7 member 13 from Mus musculus (Mouse).